A 381-amino-acid chain; its full sequence is Phthiodiolone/phenolphthiodiolone dimycocerosates ketoreductase (381 aa).

Belongs to the mer family. Phthiodiolone/phenolphthiodiolone dimycocerosates ketoreductase subfamily.

Functionally, catalyzes the reduction of the keto moiety of phthiodiolone dimycocerosates (DIM B) and glycosylated phenolphthiodiolone dimycocerosates to form the intermediate compounds phthiotriol and glycosylated phenolphthiotriol dimycocerosates during phthiocerol dimycocerosates (DIM A) and glycosylated phenolphthiocerol dimycocerosates (PGL) biosynthesis. This chain is Phthiodiolone/phenolphthiodiolone dimycocerosates ketoreductase, found in Mycobacterium bovis (strain ATCC BAA-935 / AF2122/97).